Here is a 429-residue protein sequence, read N- to C-terminus: Glucose-1-phosphate adenylyltransferase (429 aa).

Alpha-D-glucose 1-phosphate is bound by residues G162, E177–K178, and S209.

It belongs to the bacterial/plant glucose-1-phosphate adenylyltransferase family. Homotetramer.

The catalysed reaction is alpha-D-glucose 1-phosphate + ATP + H(+) = ADP-alpha-D-glucose + diphosphate. It participates in glycan biosynthesis; glycogen biosynthesis. In terms of biological role, involved in the biosynthesis of ADP-glucose, a building block required for the elongation reactions to produce glycogen. Catalyzes the reaction between ATP and alpha-D-glucose 1-phosphate (G1P) to produce pyrophosphate and ADP-Glc. In Gloeothece citriformis (strain PCC 7424) (Cyanothece sp. (strain PCC 7424)), this protein is Glucose-1-phosphate adenylyltransferase.